Here is a 555-residue protein sequence, read N- to C-terminus: CTP synthase (555 aa).

The interval 1–265 (MTRYIFITGG…GNRVCEKLNI (265 aa)) is amidoligase domain. Ser13 lines the CTP pocket. Ser13 serves as a coordination point for UTP. Residues 14 to 19 (SLGKGI) and Asp71 each bind ATP. Mg(2+) is bound by residues Asp71 and Glu139. CTP contacts are provided by residues 146–148 (DIE), 186–191 (KTKPTQ), and Lys222. Residues 186–191 (KTKPTQ) and Lys222 contribute to the UTP site. Positions 290 to 541 (TVAVVGKYVD…IKAGLAAKEA (252 aa)) constitute a Glutamine amidotransferase type-1 domain. Position 351 (Gly351) interacts with L-glutamine. Residue Cys378 is the Nucleophile; for glutamine hydrolysis of the active site. L-glutamine-binding positions include 379 to 382 (LGMQ), Glu402, and Arg469. Catalysis depends on residues His514 and Glu516.

It belongs to the CTP synthase family. As to quaternary structure, homotetramer.

The catalysed reaction is UTP + L-glutamine + ATP + H2O = CTP + L-glutamate + ADP + phosphate + 2 H(+). It carries out the reaction L-glutamine + H2O = L-glutamate + NH4(+). It catalyses the reaction UTP + NH4(+) + ATP = CTP + ADP + phosphate + 2 H(+). It functions in the pathway pyrimidine metabolism; CTP biosynthesis via de novo pathway; CTP from UDP: step 2/2. With respect to regulation, allosterically activated by GTP, when glutamine is the substrate; GTP has no effect on the reaction when ammonia is the substrate. The allosteric effector GTP functions by stabilizing the protein conformation that binds the tetrahedral intermediate(s) formed during glutamine hydrolysis. Inhibited by the product CTP, via allosteric rather than competitive inhibition. Catalyzes the ATP-dependent amination of UTP to CTP with either L-glutamine or ammonia as the source of nitrogen. Regulates intracellular CTP levels through interactions with the four ribonucleotide triphosphates. This Coxiella burnetii (strain Dugway 5J108-111) protein is CTP synthase.